The sequence spans 339 residues: Heat-inducible transcription repressor HrcA (339 aa).

Belongs to the HrcA family.

Functionally, negative regulator of class I heat shock genes (grpE-dnaK-dnaJ and groELS operons). Prevents heat-shock induction of these operons. This Leifsonia xyli subsp. xyli (strain CTCB07) protein is Heat-inducible transcription repressor HrcA.